A 401-amino-acid polypeptide reads, in one-letter code: Beta-ketoadipyl-CoA thiolase (401 aa).

Residue Cys91 is the Acyl-thioester intermediate of the active site. Active-site proton acceptor residues include His357 and Cys387.

The protein belongs to the thiolase-like superfamily. Thiolase family. Homotetramer.

The enzyme catalyses succinyl-CoA + acetyl-CoA = 3-oxoadipyl-CoA + CoA. It participates in aromatic compound metabolism; beta-ketoadipate pathway; acetyl-CoA and succinyl-CoA from 3-oxoadipate: step 2/2. In terms of biological role, catalyzes thiolytic cleavage of beta-ketoadipyl-CoA to succinyl-CoA and acetyl-CoA. The polypeptide is Beta-ketoadipyl-CoA thiolase (pcaF) (Pseudomonas knackmussii (strain DSM 6978 / CCUG 54928 / LMG 23759 / B13)).